Here is a 152-residue protein sequence, read N- to C-terminus: Large ribosomal subunit protein bL9 (152 aa).

It belongs to the bacterial ribosomal protein bL9 family.

Its function is as follows. Binds to the 23S rRNA. The sequence is that of Large ribosomal subunit protein bL9 from Nostoc punctiforme (strain ATCC 29133 / PCC 73102).